The following is a 70-amino-acid chain: DNA-directed RNA polymerase subunit omega (70 aa).

The protein belongs to the RNA polymerase subunit omega family. In terms of assembly, the RNAP catalytic core consists of 2 alpha, 1 beta, 1 beta' and 1 omega subunit. When a sigma factor is associated with the core the holoenzyme is formed, which can initiate transcription.

The catalysed reaction is RNA(n) + a ribonucleoside 5'-triphosphate = RNA(n+1) + diphosphate. Functionally, promotes RNA polymerase assembly. Latches the N- and C-terminal regions of the beta' subunit thereby facilitating its interaction with the beta and alpha subunits. This is DNA-directed RNA polymerase subunit omega from Clostridium perfringens (strain ATCC 13124 / DSM 756 / JCM 1290 / NCIMB 6125 / NCTC 8237 / Type A).